The following is a 1183-amino-acid chain: DNA-directed RNA polymerase subunit beta' (1183 aa).

Positions 60, 62, 75, and 78 each coordinate Zn(2+). Residues D449, D451, and D453 each contribute to the Mg(2+) site. Zn(2+) contacts are provided by C794, C867, C874, and C877.

The protein belongs to the RNA polymerase beta' chain family. In terms of assembly, the RNAP catalytic core consists of 2 alpha, 1 beta, 1 beta' and 1 omega subunit. When a sigma factor is associated with the core the holoenzyme is formed, which can initiate transcription. It depends on Mg(2+) as a cofactor. The cofactor is Zn(2+).

The catalysed reaction is RNA(n) + a ribonucleoside 5'-triphosphate = RNA(n+1) + diphosphate. In terms of biological role, DNA-dependent RNA polymerase catalyzes the transcription of DNA into RNA using the four ribonucleoside triphosphates as substrates. This chain is DNA-directed RNA polymerase subunit beta', found in Caldanaerobacter subterraneus subsp. tengcongensis (strain DSM 15242 / JCM 11007 / NBRC 100824 / MB4) (Thermoanaerobacter tengcongensis).